The primary structure comprises 1137 residues: Dendrite extension defective protein 1 (1137 aa).

Residues 1-41 (MLAHTHRINKCLYGQNQMRNRHALLGALPPIFLLLLPLISC) form the signal peptide. At 43-1005 (KFDPERIAAR…HAEEQSPRLA (963 aa)) the chain is on the extracellular side. The NIDO 1 domain occupies 163 to 302 (PFWNRNDLRN…GEWMFELSEL (140 aa)). Asn-240 and Asn-416 each carry an N-linked (GlcNAc...) asparagine glycan. The EGF-like; calcium-binding domain occupies 409-450 (DVDECKTNSTICHKNAICTNTPGRYFCMCKEGFSGDGQNDCS). Cystine bridges form between Cys-413-Cys-426, Cys-420-Cys-435, and Cys-437-Cys-449. In terms of domain architecture, NIDO 2 spans 519–659 (PFFGPIDLSR…GTWLYRIDKA (141 aa)). An N-linked (GlcNAc...) asparagine glycan is attached at Asn-571. Polar residues predominate over residues 738–749 (IGNQQRQQTTKA). Disordered stretches follow at residues 738–765 (IGNQQRQQTTKAVTRPRPNFSSTPHRPI), 795–856 (FRPN…PFEA), 878–897 (QTTKKQRPELSVTPQPEDLS), 906–933 (TEEDEEEAEISTETTTEMSSTTTTTKAH), and 978–998 (NSQPPKQRNDNQPTVNVGHAE). N-linked (GlcNAc...) asparagine glycosylation is present at Asn-756. Polar residues predominate over residues 798 to 809 (NQRNGVQKSTQR). Residues 819–833 (PLKEEATTSVPREKT) are compositionally biased toward basic and acidic residues. The span at 906–915 (TEEDEEEAEI) shows a compositional bias: acidic residues. The span at 916-933 (STETTTEMSSTTTTTKAH) shows a compositional bias: low complexity. Positions 978–992 (NSQPPKQRNDNQPTV) are enriched in polar residues. Residues 1006 to 1026 (ILLPVMIILAWLVILVCIGAV) form a helical membrane-spanning segment. The Cytoplasmic segment spans residues 1027–1037 (VCCKRRNSRES). A disordered region spans residues 1106–1125 (ARLSTQERQSPPSFVNNGYT).

Post-translationally, may be proteolytically cleaved and secreted.

The protein localises to the membrane. The protein resides in the cell projection. It localises to the dendrite. It is found in the secreted. In terms of biological role, along with dyf-7, enables neurite growth and maintenance by anchoring amphid dendritic tips during neuron cell body migration in embryonic and larval development. Promotes seam cell remodeling during the dauer phase. Plays a role in positively regulating locomotion during the dauer phase. The polypeptide is Dendrite extension defective protein 1 (Caenorhabditis elegans).